We begin with the raw amino-acid sequence, 301 residues long: Protein FdhE homolog (301 aa).

The protein belongs to the FdhE family.

It is found in the cytoplasm. Necessary for formate dehydrogenase activity. This is Protein FdhE homolog from Shewanella baltica (strain OS185).